Reading from the N-terminus, the 360-residue chain is Photosystem II protein D1 1 (360 aa).

The next 3 helical transmembrane spans lie at 29-46 (YVGWFGVLMIPTLLSATI), 118-133 (HFLIGVFCYLGREWEL), and 142-156 (WICIAYSAPVAAAAA). Histidine 118 lines the chlorophyll a pocket. A pheophytin a-binding site is contributed by tyrosine 126. [CaMn4O5] cluster is bound by residues aspartate 170 and glutamate 189. Residues 197-218 (FHMLGVAGVFGGSLFSAMHGSL) traverse the membrane as a helical segment. Histidine 198 contacts chlorophyll a. A quinone is bound by residues histidine 215 and 264 to 265 (SF). Fe cation is bound at residue histidine 215. Histidine 272 is a binding site for Fe cation. Residues 274 to 288 (FLAAWPVIGIWFTAL) traverse the membrane as a helical segment. 4 residues coordinate [CaMn4O5] cluster: histidine 332, glutamate 333, aspartate 342, and alanine 344. A propeptide spanning residues 345 to 360 (GTESAPVAVGNADLNG) is cleaved from the precursor.

This sequence belongs to the reaction center PufL/M/PsbA/D family. PSII is composed of 1 copy each of membrane proteins PsbA, PsbB, PsbC, PsbD, PsbE, PsbF, PsbH, PsbI, PsbJ, PsbK, PsbL, PsbM, PsbT, PsbX, Psb30/Ycf12, peripheral proteins PsbO, CyanoQ (PsbQ), PsbU, PsbV and a large number of cofactors. It forms dimeric complexes. It depends on The D1/D2 heterodimer binds P680, chlorophylls that are the primary electron donor of PSII, and subsequent electron acceptors. It shares a non-heme iron and each subunit binds pheophytin, quinone, additional chlorophylls, carotenoids and lipids. D1 provides most of the ligands for the Mn4-Ca-O5 cluster of the oxygen-evolving complex (OEC). There is also a Cl(-1) ion associated with D1 and D2, which is required for oxygen evolution. The PSII complex binds additional chlorophylls, carotenoids and specific lipids. as a cofactor. Post-translationally, tyr-161 forms a radical intermediate that is referred to as redox-active TyrZ, YZ or Y-Z. C-terminally processed by CtpA; processing is essential to allow assembly of the oxygen-evolving complex and thus photosynthetic growth.

Its subcellular location is the cell inner membrane. It carries out the reaction 2 a plastoquinone + 4 hnu + 2 H2O = 2 a plastoquinol + O2. Photosystem II (PSII) is a light-driven water:plastoquinone oxidoreductase that uses light energy to abstract electrons from H(2)O, generating O(2) and a proton gradient subsequently used for ATP formation. It consists of a core antenna complex that captures photons, and an electron transfer chain that converts photonic excitation into a charge separation. The D1/D2 (PsbA/PsbD) reaction center heterodimer binds P680, the primary electron donor of PSII as well as several subsequent electron acceptors. The chain is Photosystem II protein D1 1 from Gloeobacter violaceus (strain ATCC 29082 / PCC 7421).